The chain runs to 407 residues: Putative metabolite transport protein HI_1104 (407 aa).

At 1 to 16 (MTNKVNSYGWKALIGS) the chain is on the cytoplasmic side. Residues 17–37 (AVGYGMDGFDLLILGFMLSAI) traverse the membrane as a helical segment. Over 38-48 (SADLNLTPAQG) the chain is Periplasmic. Residues 49–69 (GSLVTWTLIGAVFGGILFGAL) form a helical membrane-spanning segment. At 70–77 (SDKYGRVR) the chain is on the cytoplasmic side. A helical membrane pass occupies residues 78-98 (VLTWTILLFAVFTGLCAIAQG). The Periplasmic portion of the chain corresponds to 99–107 (YWDLLIYRT). A helical transmembrane segment spans residues 108–128 (IAGIGLGGEFGIGMALAAEAW). Residues 129–138 (PARHRAKAAS) lie on the Cytoplasmic side of the membrane. Residues 139–159 (YVALGWQVGVLGAALLTPLLL) traverse the membrane as a helical segment. Pro160 is a topological domain (periplasmic). A helical membrane pass occupies residues 161-181 (HIGWRGMFLVGIFPAFVAWFL). Residues 182-224 (RSHLHEPEIFTQKQTALSTQSSFTDKLRSFQLLIKDKATSKIS) are Cytoplasmic-facing. The helical transmembrane segment at 225 to 245 (LGIVVLTSVQNFGYYGIMIWL) threads the bilayer. Residues 246-261 (PNFLSKQLGFSLTKSG) lie on the Periplasmic side of the membrane. Residues 262–282 (LWTAVTVCGMMAGIWIFGQLA) form a helical membrane-spanning segment. Residues 283 to 288 (DRIGRK) are Cytoplasmic-facing. A helical membrane pass occupies residues 289 to 309 (PSFLLFQLGAVISIVVYSQLT). The Periplasmic portion of the chain corresponds to 310–312 (DPD). Residues 313 to 333 (IMLLAGAFLGMFVNGMLGGYG) traverse the membrane as a helical segment. Over 334-357 (ALMAEAYPTEARATAQNVLFNIGR) the chain is Cytoplasmic. The next 2 helical transmembrane spans lie at 358–378 (AVGGFGPVVVGSVVLAYSFQT) and 379–399 (AIALLAIIYVIDMLATIFLIP). The Cytoplasmic portion of the chain corresponds to 400–407 (ELKGKALD).

This sequence belongs to the major facilitator superfamily. Aromatic acid:H(+) symporter (AAHS) (TC 2.A.1.15) family.

The protein localises to the cell inner membrane. In Haemophilus influenzae (strain ATCC 51907 / DSM 11121 / KW20 / Rd), this protein is Putative metabolite transport protein HI_1104.